We begin with the raw amino-acid sequence, 277 residues long: Putative phosphoenolpyruvate synthase regulatory protein (277 aa).

Residue 157–164 (GVSRCGKT) participates in ADP binding.

Belongs to the pyruvate, phosphate/water dikinase regulatory protein family. PSRP subfamily.

It catalyses the reaction [pyruvate, water dikinase] + ADP = [pyruvate, water dikinase]-phosphate + AMP + H(+). It carries out the reaction [pyruvate, water dikinase]-phosphate + phosphate + H(+) = [pyruvate, water dikinase] + diphosphate. Its function is as follows. Bifunctional serine/threonine kinase and phosphorylase involved in the regulation of the phosphoenolpyruvate synthase (PEPS) by catalyzing its phosphorylation/dephosphorylation. The protein is Putative phosphoenolpyruvate synthase regulatory protein of Enterobacter sp. (strain 638).